The primary structure comprises 200 residues: Elongation factor Ts (200 aa).

An involved in Mg(2+) ion dislocation from EF-Tu region spans residues 83 to 86 (TDFA).

Belongs to the EF-Ts family.

The protein resides in the cytoplasm. In terms of biological role, associates with the EF-Tu.GDP complex and induces the exchange of GDP to GTP. It remains bound to the aminoacyl-tRNA.EF-Tu.GTP complex up to the GTP hydrolysis stage on the ribosome. The chain is Elongation factor Ts from Syntrophobacter fumaroxidans (strain DSM 10017 / MPOB).